The chain runs to 366 residues: L-idonate 5-dehydrogenase (366 aa).

Zn(2+) is bound by residues cysteine 56, histidine 81, cysteine 111, cysteine 114, cysteine 117, cysteine 125, and glutamate 167.

This sequence belongs to the zinc-containing alcohol dehydrogenase family. It depends on Zn(2+) as a cofactor.

The enzyme catalyses L-idonate + NAD(+) = 5-dehydro-D-gluconate + NADH + H(+). Its pathway is carbohydrate acid metabolism; L-idonate degradation. Functionally, involved in the catabolism of ascorbate to tartrate. The enzyme has no activity with NADP(+). This is L-idonate 5-dehydrogenase from Vitis vinifera (Grape).